The sequence spans 724 residues: Probable ATP-dependent RNA helicase DDX4 (724 aa).

Residues 1-246 are disordered; the sequence is MGDEDWEAEI…SDTQGPKVTY (246 aa). Residues 30-42 show a composition bias toward polar residues; that stretch reads NGDNFNRTPASSS. A compositionally biased stretch (basic and acidic residues) spans 69 to 78; it reads DAGECNKRDN. The span at 150-162 shows a compositional bias: gly residues; that stretch reads RGSFRGCRGGFGL. Over residues 195 to 205 the composition is skewed to low complexity; sequence GDTSQSRSGSG. Phosphoserine occurs at positions 222 and 226. The interaction with RANBP9 stretch occupies residues 228–247; sequence KSEAEGGESSDTQGPKVTYI. The short motif at 288 to 316 is the Q motif element; it reads LTFEEANLCQTLNNNIAKAGYTKLTPVQK. Residues 319-502 form the Helicase ATP-binding domain; the sequence is IPIILAGRDL…AEFLKSNYLF (184 aa). Residue 332 to 339 coordinates ATP; sequence AQTGSGKT. Positions 446–449 match the DEAD box motif; sequence DEAD. Residues 530–675 enclose the Helicase C-terminal domain; that stretch reads KLVEILRNIG…DVPAWLEEIA (146 aa). Positions 704–715 are enriched in polar residues; that stretch reads LNTAGFSSSQAP. Residues 704-724 form a disordered region; sequence LNTAGFSSSQAPNPVDDESWD. A Phosphoserine modification is found at Ser-722.

The protein belongs to the DEAD box helicase family. DDX4/VASA subfamily. In terms of assembly, found in a mRNP complex, at least composed of TDRD1, TDRD6, TDRD7 and DDX4. Interacts with RANBP9. Interacts with RANBP10. Interacts with PIWIL2 and MAEL. Interacts with BMAL1 and CLOCK. Interacts with Tex19.1 and, probably, Tex19.2. Interacts with RBM46. Expressed only in ovary and testis. Expressed in migratory primordial germ cells in the region of the gonadal ridge in both sexes.

It localises to the cytoplasm. Its subcellular location is the perinuclear region. It catalyses the reaction ATP + H2O = ADP + phosphate + H(+). In terms of biological role, ATP-dependent RNA helicase required during spermatogenesis. Required to repress transposable elements and preventing their mobilization, which is essential for the germline integrity. Acts via the piRNA metabolic process, which mediates the repression of transposable elements during meiosis by forming complexes composed of piRNAs and Piwi proteins and governs the methylation and subsequent repression of transposons. Involved in the secondary piRNAs metabolic process, the production of piRNAs in fetal male germ cells through a ping-pong amplification cycle. Required for PIWIL2 slicing-triggered piRNA biogenesis: helicase activity enables utilization of one of the slice cleavage fragments generated by PIWIL2 and processing these pre-piRNAs into piRNAs. The chain is Probable ATP-dependent RNA helicase DDX4 (DDX4) from Homo sapiens (Human).